We begin with the raw amino-acid sequence, 310 residues long: Protein BIG GRAIN 1 (310 aa).

The disordered stretch occupies residues 77–140; the sequence is SYRARAPGPH…EKKAKKPGAS (64 aa). Over residues 90 to 106 the composition is skewed to low complexity; it reads SSSSECSSYGGFSSSEA.

The protein belongs to the BIG GRAIN 1 (BG1) plant protein family. As to expression, mostly expressed in the vascular tissues of leaves, culms and young panicles, especially in hulls.

It is found in the cell membrane. Functionally, involved in auxin transport. Positive regulator of the auxin signaling pathway involved in gravitropism, plant growth and grain development. The chain is Protein BIG GRAIN 1 from Oryza sativa subsp. japonica (Rice).